Reading from the N-terminus, the 155-residue chain is Small ribosomal subunit protein uS7 (155 aa).

This sequence belongs to the universal ribosomal protein uS7 family. As to quaternary structure, part of the 30S ribosomal subunit. Contacts proteins S9 and S11.

In terms of biological role, one of the primary rRNA binding proteins, it binds directly to 16S rRNA where it nucleates assembly of the head domain of the 30S subunit. Is located at the subunit interface close to the decoding center, probably blocks exit of the E-site tRNA. This Xylella fastidiosa (strain 9a5c) protein is Small ribosomal subunit protein uS7.